Here is a 248-residue protein sequence, read N- to C-terminus: Probable transcriptional regulatory protein Pcar_2335 (248 aa).

Belongs to the TACO1 family.

Its subcellular location is the cytoplasm. The polypeptide is Probable transcriptional regulatory protein Pcar_2335 (Syntrophotalea carbinolica (strain DSM 2380 / NBRC 103641 / GraBd1) (Pelobacter carbinolicus)).